The primary structure comprises 495 residues: Cytochrome P450 monooxygenase 88 (495 aa).

Residues 2-22 form a helical membrane-spanning segment; sequence FLQIVTSVLATGLLYALISVL. N-linked (GlcNAc...) asparagine glycosylation is found at N25 and N198. Residue C428 coordinates heme.

It belongs to the cytochrome P450 family. Heme is required as a cofactor.

The protein localises to the membrane. It functions in the pathway secondary metabolite biosynthesis. Functionally, cytochrome P450 monooxygenase that is able to use 4-ethoxybenzoic acid as a substrate for oxidation. This Postia placenta (strain ATCC 44394 / Madison 698-R) (Brown rot fungus) protein is Cytochrome P450 monooxygenase 88.